The following is a 606-amino-acid chain: Aspartate--tRNA(Asp/Asn) ligase (606 aa).

E177 is an L-aspartate binding site. Residues 201–204 (QLFK) are aspartate. Residue R223 coordinates L-aspartate. ATP is bound by residues 223 to 225 (RDE) and Q232. Residue H461 coordinates L-aspartate. E499 lines the ATP pocket. R506 is a binding site for L-aspartate. An ATP-binding site is contributed by 551–554 (GMDR).

Belongs to the class-II aminoacyl-tRNA synthetase family. Type 1 subfamily. In terms of assembly, homodimer.

The protein resides in the cytoplasm. The enzyme catalyses tRNA(Asx) + L-aspartate + ATP = L-aspartyl-tRNA(Asx) + AMP + diphosphate. In terms of biological role, aspartyl-tRNA synthetase with relaxed tRNA specificity since it is able to aspartylate not only its cognate tRNA(Asp) but also tRNA(Asn). Reaction proceeds in two steps: L-aspartate is first activated by ATP to form Asp-AMP and then transferred to the acceptor end of tRNA(Asp/Asn). The protein is Aspartate--tRNA(Asp/Asn) ligase of Prochlorococcus marinus (strain MIT 9313).